We begin with the raw amino-acid sequence, 419 residues long: Phosphoribosylamine--glycine ligase (419 aa).

The region spanning 109–311 (KQLLIEAGVP…LEKVLMACVE (203 aa)) is the ATP-grasp domain. 135–191 (ATKMGAPIVVKADGLAAGKGVIVAQTSAEATTAIAELFDQGFEKIVVEEFLPGEEVS) provides a ligand contact to ATP. Residues E281 and N283 each coordinate Mg(2+).

It belongs to the GARS family. Mg(2+) serves as cofactor. The cofactor is Mn(2+).

It carries out the reaction 5-phospho-beta-D-ribosylamine + glycine + ATP = N(1)-(5-phospho-beta-D-ribosyl)glycinamide + ADP + phosphate + H(+). It participates in purine metabolism; IMP biosynthesis via de novo pathway; N(1)-(5-phospho-D-ribosyl)glycinamide from 5-phospho-alpha-D-ribose 1-diphosphate: step 2/2. This chain is Phosphoribosylamine--glycine ligase, found in Synechocystis sp. (strain ATCC 27184 / PCC 6803 / Kazusa).